The primary structure comprises 822 residues: AP-1 complex subunit gamma-1 (822 aa).

A disordered region spans residues 597–628 (EIVQTNGETEPAPLETKPPPSGPQPTSQANDL). A GAE domain is found at 702 to 817 (AGIPSITAYS…QDLAEVNNFP (116 aa)).

It belongs to the adaptor complexes large subunit family. As to quaternary structure, adaptor protein complex 1 (AP-1) is a heterotetramer composed of two large adaptins (gamma-type subunit AP1G1 and beta-type subunit AP1B1), a medium adaptin (mu-type subunit AP1M1 or AP1M2) and a small adaptin (sigma-type subunit AP1S1 or AP1S2 or AP1S3). Interacts (via GAE domain) with RABEP1. Interacts with EPS15. Interacts with SYNRG/gamma-synergin. Interacts (via GAE domain) with AP1AR (via coiled-coil domain). Interacts with CLN3 (via dileucine motif); this interaction facilitates lysosomal targeting. Interacts (via GAE domain) with AFTPH/aftiphilin; the interaction is required to recruit AFTPH/aftiphilin to the perinuclear region of the cell.

Its subcellular location is the golgi apparatus. It is found in the cytoplasmic vesicle. The protein resides in the clathrin-coated vesicle membrane. It localises to the cytoplasm. The protein localises to the perinuclear region. Its subcellular location is the clathrin-coated vesicle. It is found in the membrane. The protein resides in the clathrin-coated pit. Subunit of clathrin-associated adaptor protein complex 1 that plays a role in protein sorting in the late-Golgi/trans-Golgi network (TGN) and/or endosomes. The AP complexes mediate both the recruitment of clathrin to membranes and the recognition of sorting signals within the cytosolic tails of transmembrane cargo molecules. In association with AFTPH/aftiphilin in the aftiphilin/p200/gamma-synergin complex, involved in the trafficking of transferrin from early to recycling endosomes, and the membrane trafficking of furin and the lysosomal enzyme cathepsin D between the trans-Golgi network (TGN) and endosomes. The protein is AP-1 complex subunit gamma-1 (AP1G1) of Pongo abelii (Sumatran orangutan).